Reading from the N-terminus, the 299-residue chain is 4-diphosphocytidyl-2-C-methyl-D-erythritol kinase (299 aa).

Lys17 is a catalytic residue. 103–113 (PVASGIGGGSG) serves as a coordination point for ATP. The active site involves Asp145.

This sequence belongs to the GHMP kinase family. IspE subfamily.

It catalyses the reaction 4-CDP-2-C-methyl-D-erythritol + ATP = 4-CDP-2-C-methyl-D-erythritol 2-phosphate + ADP + H(+). It functions in the pathway isoprenoid biosynthesis; isopentenyl diphosphate biosynthesis via DXP pathway; isopentenyl diphosphate from 1-deoxy-D-xylulose 5-phosphate: step 3/6. In terms of biological role, catalyzes the phosphorylation of the position 2 hydroxy group of 4-diphosphocytidyl-2C-methyl-D-erythritol. In Bartonella tribocorum (strain CIP 105476 / IBS 506), this protein is 4-diphosphocytidyl-2-C-methyl-D-erythritol kinase.